Consider the following 236-residue polypeptide: DNA repair protein RecO (236 aa).

The protein belongs to the RecO family.

Involved in DNA repair and RecF pathway recombination. This chain is DNA repair protein RecO, found in Haemophilus influenzae (strain 86-028NP).